A 589-amino-acid chain; its full sequence is Cytoplasmic polyadenylation element-binding protein 2 (589 aa).

Disordered stretches follow at residues 1 to 103 and 118 to 140; these read MPPP…QAAA and PLLKQSPWSNHQSSGWGTGSMSW. Positions 24–33 are enriched in low complexity; sequence FFPSFSPVSP. Residues 44–53 are compositionally biased toward gly residues; it reads SGGGGGGFGG. The span at 60-81 shows a compositional bias: pro residues; that stretch reads VPPPPPPAMNIPQQQPPPPAAP. Composition is skewed to low complexity over residues 82 to 103 and 130 to 140; these read QQPQSRRSPVSPQLQQQHQAAA and SSGWGTGSMSW. Residue serine 89 is modified to Phosphoserine. RRM domains are found at residues 332-423 and 440-522; these read RKVF…PWNL and KTIF…PYVL.

This sequence belongs to the RRM CPEB family. As to quaternary structure, interacts with TENT2/GLD2.

The protein localises to the cytoplasm. In terms of biological role, may play a role in translational regulation of stored mRNAs in transcriptionally inactive haploid spermatids. Binds to poly(U) RNA oligomers. Required for cell cycle progression, specifically for the transition from metaphase to anaphase. This Homo sapiens (Human) protein is Cytoplasmic polyadenylation element-binding protein 2 (CPEB2).